Consider the following 329-residue polypeptide: MPVLMPSAHVPTIDISPLFGTDAAAKKRVAEEIHGACRGSGFFYATNHGVDVQQLQDVVNEFHGAMTDQEKHDLAIHAYNPDNPHVRNGYYKAVPGRKAVESFCYLNPDFGEDHPMIAAGTPMHEVNLWPDEERHPRFRPFCEGYYRQMLKLSTVLMRGLALALGRPEHFFDAALAEQDSLSSVSLIRYPYLEEYPPVKTGPDGQLLSFEDHLDVSMITVLFQTQVQNLQVETVDGWRDIPTSENDFLVNCGTYMAHVTNDYFPAPNHRVKFVNAERLSLPFFLNGGHEAVIEPFVPEGASEEVRNEALSYGDYLQHGLRALIVKNGQT.

R87, Y91, S183, and Y189 together coordinate isopenicillin N. 6 residues coordinate N-[(5S)-5-amino-5-carboxypentanoyl]-L-cysteinyl-D-valine: R87, Y91, S183, Y189, H212, and D214. One can recognise a Fe2OG dioxygenase domain in the interval 180 to 286; sequence SLSSVSLIRY…RLSLPFFLNG (107 aa). The Fe(2+) site is built by H212, D214, and H268. R277 contributes to the 2-oxoglutarate binding site. S279 serves as a coordination point for isopenicillin N. Position 279 (S279) interacts with N-[(5S)-5-amino-5-carboxypentanoyl]-L-cysteinyl-D-valine.

This sequence belongs to the iron/ascorbate-dependent oxidoreductase family. It depends on Fe cation as a cofactor. L-ascorbate is required as a cofactor.

The catalysed reaction is N-[(5S)-5-amino-5-carboxypentanoyl]-L-cysteinyl-D-valine + O2 = isopenicillin N + 2 H2O. It functions in the pathway antibiotic biosynthesis; penicillin G biosynthesis; penicillin G from L-alpha-aminoadipate and L-cysteine and L-valine: step 2/3. Removes, in the presence of oxygen, 4 hydrogen atoms from delta-L-(alpha-aminoadipyl)-L-cysteinyl-D-valine (ACV) to form the azetidinone and thiazolidine rings of isopenicillin. In Streptomyces clavuligerus, this protein is Isopenicillin N synthase (pcbC).